The primary structure comprises 89 residues: Small ribosomal subunit protein uS15 (89 aa).

This sequence belongs to the universal ribosomal protein uS15 family. Part of the 30S ribosomal subunit. Forms a bridge to the 50S subunit in the 70S ribosome, contacting the 23S rRNA.

In terms of biological role, one of the primary rRNA binding proteins, it binds directly to 16S rRNA where it helps nucleate assembly of the platform of the 30S subunit by binding and bridging several RNA helices of the 16S rRNA. Functionally, forms an intersubunit bridge (bridge B4) with the 23S rRNA of the 50S subunit in the ribosome. This Rhodococcus erythropolis (strain PR4 / NBRC 100887) protein is Small ribosomal subunit protein uS15.